A 208-amino-acid polypeptide reads, in one-letter code: Imidazoleglycerol-phosphate dehydratase (208 aa).

It belongs to the imidazoleglycerol-phosphate dehydratase family.

The protein resides in the cytoplasm. The catalysed reaction is D-erythro-1-(imidazol-4-yl)glycerol 3-phosphate = 3-(imidazol-4-yl)-2-oxopropyl phosphate + H2O. The protein operates within amino-acid biosynthesis; L-histidine biosynthesis; L-histidine from 5-phospho-alpha-D-ribose 1-diphosphate: step 6/9. The protein is Imidazoleglycerol-phosphate dehydratase of Anaeromyxobacter dehalogenans (strain 2CP-1 / ATCC BAA-258).